We begin with the raw amino-acid sequence, 88 residues long: Large ribosomal subunit protein bL27 (88 aa).

The protein belongs to the bacterial ribosomal protein bL27 family.

This is Large ribosomal subunit protein bL27 from Mycolicibacterium smegmatis (strain ATCC 700084 / mc(2)155) (Mycobacterium smegmatis).